A 539-amino-acid polypeptide reads, in one-letter code: Chaperonin GroEL (539 aa).

ATP is bound by residues 29 to 32, 86 to 90, G413, 476 to 478, and D492; these read TLGP, DGTTT, and NAA.

It belongs to the chaperonin (HSP60) family. Forms a cylinder of 14 subunits composed of two heptameric rings stacked back-to-back. Interacts with the co-chaperonin GroES.

It is found in the cytoplasm. The enzyme catalyses ATP + H2O + a folded polypeptide = ADP + phosphate + an unfolded polypeptide.. Together with its co-chaperonin GroES, plays an essential role in assisting protein folding. The GroEL-GroES system forms a nano-cage that allows encapsulation of the non-native substrate proteins and provides a physical environment optimized to promote and accelerate protein folding. This is Chaperonin GroEL from Geobacillus sp. (strain WCH70).